The primary structure comprises 234 residues: Adenosine 5'-phosphosulfate reductase (234 aa).

The [4Fe-4S] cluster site is built by Cys120, Cys121, Cys203, and Cys206. Catalysis depends on Cys229, which acts as the Nucleophile; cysteine thiosulfonate intermediate.

The protein belongs to the PAPS reductase family. CysH subfamily. [4Fe-4S] cluster is required as a cofactor.

It localises to the cytoplasm. The catalysed reaction is [thioredoxin]-disulfide + sulfite + AMP + 2 H(+) = adenosine 5'-phosphosulfate + [thioredoxin]-dithiol. It functions in the pathway sulfur metabolism; hydrogen sulfide biosynthesis; sulfite from sulfate. Catalyzes the formation of sulfite from adenosine 5'-phosphosulfate (APS) using thioredoxin as an electron donor. The sequence is that of Adenosine 5'-phosphosulfate reductase from Bacillus cereus (strain 03BB102).